Consider the following 58-residue polypeptide: Photosystem II reaction center protein K (58 aa).

Residues 1–21 constitute a propeptide that is removed on maturation; it reads MTVSYSIYLENSLHFGDALLA. A helical membrane pass occupies residues 29–49; sequence IFDPIVDVMPVIPVFFLLLAF.

This sequence belongs to the PsbK family. PSII is composed of 1 copy each of membrane proteins PsbA, PsbB, PsbC, PsbD, PsbE, PsbF, PsbH, PsbI, PsbJ, PsbK, PsbL, PsbM, PsbT, PsbX, PsbY, PsbZ, Psb30/Ycf12, at least 3 peripheral proteins of the oxygen-evolving complex and a large number of cofactors. It forms dimeric complexes.

It localises to the plastid. It is found in the chloroplast thylakoid membrane. Functionally, one of the components of the core complex of photosystem II (PSII). PSII is a light-driven water:plastoquinone oxidoreductase that uses light energy to abstract electrons from H(2)O, generating O(2) and a proton gradient subsequently used for ATP formation. It consists of a core antenna complex that captures photons, and an electron transfer chain that converts photonic excitation into a charge separation. This is Photosystem II reaction center protein K from Adiantum capillus-veneris (Maidenhair fern).